Consider the following 407-residue polypeptide: Substance-P receptor (407 aa).

The interval 1–20 (MDNVLPVDSDLFPNTSTNTS) is disordered. Over 1 to 31 (MDNVLPVDSDLFPNTSTNTSESNQFVQPTWQ) the chain is Extracellular. Residues N14 and N18 are each glycosylated (N-linked (GlcNAc...) asparagine). Residues 32–54 (IVLWAAAYTVIVVTSVVGNVVVI) traverse the membrane as a helical segment. Topologically, residues 55–64 (WIILAHKRMR) are cytoplasmic. A helical transmembrane segment spans residues 65–86 (TVTNYFLVNLAFAEACMAAFNT). Residues 87 to 106 (VVNFTYAVHNVWYYGLFYCK) lie on the Extracellular side of the membrane. An intrachain disulfide couples C105 to C180. A helical membrane pass occupies residues 107–128 (FHNFFPIAALFASIYSMTAVAF). Topologically, residues 129 to 148 (DRYMAIIHPLQPRLSATATK) are cytoplasmic. A helical membrane pass occupies residues 149–169 (VVIFVIWVLALLLAFPQGYYS). Topologically, residues 170–194 (TTETMPSRVVCMIEWPEHPNRTYEK) are extracellular. A helical membrane pass occupies residues 195-219 (AYHICVTVLIYFLPLLVIGYAYTVV). Over 220–248 (GITLWASEIPGDSSDRYHEQVSAKRKVVK) the chain is Cytoplasmic. A helical transmembrane segment spans residues 249–270 (MMIVVVCTFAICWLPFHIFFLL). Residues 271-283 (PYINPDLYLKKFI) are Extracellular-facing. Residues 284 to 308 (QQVYLASMWLAMSSTMYNPIIYCCL) traverse the membrane as a helical segment. At 309 to 407 (NDRFRLGFKH…SSSFYSNMLA (99 aa)) the chain is on the cytoplasmic side. C322 is lipidated: S-palmitoyl cysteine. Positions 362–407 (VGAHEDEPEEGPKATPSSLDLTSNGSSRSNSKTMTESSSFYSNMLA) are disordered. Polar residues predominate over residues 376 to 407 (TPSSLDLTSNGSSRSNSKTMTESSSFYSNMLA).

The protein belongs to the G-protein coupled receptor 1 family. In terms of assembly, interacts with ARRB1.

The protein resides in the cell membrane. Its function is as follows. This is a receptor for the tachykinin neuropeptide substance P. It is probably associated with G proteins that activate a phosphatidylinositol-calcium second messenger system. The rank order of affinity of this receptor to tachykinins is: substance P &gt; substance K &gt; neuromedin K. This is Substance-P receptor (Tacr1) from Mus musculus (Mouse).